A 291-amino-acid polypeptide reads, in one-letter code: Porphobilinogen deaminase (291 aa).

Cysteine 237 carries the post-translational modification S-(dipyrrolylmethanemethyl)cysteine.

The protein belongs to the HMBS family. Monomer. The cofactor is dipyrromethane.

It catalyses the reaction 4 porphobilinogen + H2O = hydroxymethylbilane + 4 NH4(+). It participates in porphyrin-containing compound metabolism; protoporphyrin-IX biosynthesis; coproporphyrinogen-III from 5-aminolevulinate: step 2/4. In terms of biological role, tetrapolymerization of the monopyrrole PBG into the hydroxymethylbilane pre-uroporphyrinogen in several discrete steps. This is Porphobilinogen deaminase from Clostridium perfringens (strain ATCC 13124 / DSM 756 / JCM 1290 / NCIMB 6125 / NCTC 8237 / Type A).